The primary structure comprises 166 residues: ATP synthase subunit b (166 aa).

A helical transmembrane segment spans residues 10–30 (LLFWMVIVFGIVFVILAKYGF).

Belongs to the ATPase B chain family. F-type ATPases have 2 components, F(1) - the catalytic core - and F(0) - the membrane proton channel. F(1) has five subunits: alpha(3), beta(3), gamma(1), delta(1), epsilon(1). F(0) has three main subunits: a(1), b(2) and c(10-14). The alpha and beta chains form an alternating ring which encloses part of the gamma chain. F(1) is attached to F(0) by a central stalk formed by the gamma and epsilon chains, while a peripheral stalk is formed by the delta and b chains.

It is found in the cell inner membrane. Its function is as follows. F(1)F(0) ATP synthase produces ATP from ADP in the presence of a proton or sodium gradient. F-type ATPases consist of two structural domains, F(1) containing the extramembraneous catalytic core and F(0) containing the membrane proton channel, linked together by a central stalk and a peripheral stalk. During catalysis, ATP synthesis in the catalytic domain of F(1) is coupled via a rotary mechanism of the central stalk subunits to proton translocation. Component of the F(0) channel, it forms part of the peripheral stalk, linking F(1) to F(0). This is ATP synthase subunit b from Phocaeicola vulgatus (strain ATCC 8482 / DSM 1447 / JCM 5826 / CCUG 4940 / NBRC 14291 / NCTC 11154) (Bacteroides vulgatus).